A 155-amino-acid polypeptide reads, in one-letter code: Ribosomal RNA large subunit methyltransferase H (155 aa).

S-adenosyl-L-methionine is bound by residues L72, G104, and 123-128 (LAKITL).

Belongs to the RNA methyltransferase RlmH family. As to quaternary structure, homodimer.

The protein resides in the cytoplasm. It carries out the reaction pseudouridine(1915) in 23S rRNA + S-adenosyl-L-methionine = N(3)-methylpseudouridine(1915) in 23S rRNA + S-adenosyl-L-homocysteine + H(+). Functionally, specifically methylates the pseudouridine at position 1915 (m3Psi1915) in 23S rRNA. This Mycoplasma mycoides subsp. mycoides SC (strain CCUG 32753 / NCTC 10114 / PG1) protein is Ribosomal RNA large subunit methyltransferase H.